A 198-amino-acid polypeptide reads, in one-letter code: Holliday junction branch migration complex subunit RuvA (198 aa).

A domain I region spans residues 1–63 (MYDYIKGQLT…EDAHLLFGFH (63 aa)). Residues 64–142 (TEDEKDVFLK…EAPQETGNTK (79 aa)) are domain II. The flexible linker stretch occupies residues 143-147 (ARSNK). Residues 148–198 (AGNTQLDEAIEALLALGYKATELKKIRAFFEGTSETAEQYIKSALKLLMKG) are domain III.

It belongs to the RuvA family. Homotetramer. Forms an RuvA(8)-RuvB(12)-Holliday junction (HJ) complex. HJ DNA is sandwiched between 2 RuvA tetramers; dsDNA enters through RuvA and exits via RuvB. An RuvB hexamer assembles on each DNA strand where it exits the tetramer. Each RuvB hexamer is contacted by two RuvA subunits (via domain III) on 2 adjacent RuvB subunits; this complex drives branch migration. In the full resolvosome a probable DNA-RuvA(4)-RuvB(12)-RuvC(2) complex forms which resolves the HJ.

Its subcellular location is the cytoplasm. The RuvA-RuvB-RuvC complex processes Holliday junction (HJ) DNA during genetic recombination and DNA repair, while the RuvA-RuvB complex plays an important role in the rescue of blocked DNA replication forks via replication fork reversal (RFR). RuvA specifically binds to HJ cruciform DNA, conferring on it an open structure. The RuvB hexamer acts as an ATP-dependent pump, pulling dsDNA into and through the RuvAB complex. HJ branch migration allows RuvC to scan DNA until it finds its consensus sequence, where it cleaves and resolves the cruciform DNA. This chain is Holliday junction branch migration complex subunit RuvA, found in Streptococcus pyogenes serotype M12 (strain MGAS2096).